The chain runs to 947 residues: Translation initiation factor IF-2 (947 aa).

The segment at 61-284 is disordered; it reads IQANQPAKNP…TAKNNKSHKI (224 aa). Over residues 151-169 the composition is skewed to basic and acidic residues; sequence QIEKAKQKLQEIQKSREAL. Positions 175–188 are enriched in low complexity; sequence SNANNANSTNNANN. Over residues 189–206 the composition is skewed to basic and acidic residues; sequence AKKEISEVKKQEQEIKRH. A compositionally biased stretch (basic residues) spans 207-218; it reads ENIKRRTGFRVI. Over residues 247–262 the composition is skewed to basic and acidic residues; the sequence is EDIKKEWQEKDKQEAK. The tr-type G domain occupies 446 to 615; it reads ERPPVVTIMG…LIQADIMELK (170 aa). A G1 region spans residues 455–462; sequence GHVDHGKT. 455-462 contacts GTP; it reads GHVDHGKT. Residues 480–484 are G2; the sequence is GITQH. Residues 501–504 are G3; the sequence is DTPG. Residues 501–505 and 555–558 contribute to the GTP site; these read DTPGH and NKMD. Positions 555 to 558 are G4; sequence NKMD. The G5 stretch occupies residues 591 to 593; sequence SAK.

Belongs to the TRAFAC class translation factor GTPase superfamily. Classic translation factor GTPase family. IF-2 subfamily.

It is found in the cytoplasm. Its function is as follows. One of the essential components for the initiation of protein synthesis. Protects formylmethionyl-tRNA from spontaneous hydrolysis and promotes its binding to the 30S ribosomal subunits. Also involved in the hydrolysis of GTP during the formation of the 70S ribosomal complex. The protein is Translation initiation factor IF-2 of Helicobacter pylori (strain P12).